Reading from the N-terminus, the 264-residue chain is Zinc import ATP-binding protein ZnuC (264 aa).

The ABC transporter domain occupies 11-226 (IELQNIKVVF…PTFIHLFGDQ (216 aa)). 43–50 (GPNGGGKS) lines the ATP pocket.

This sequence belongs to the ABC transporter superfamily. Zinc importer (TC 3.A.1.15.5) family. As to quaternary structure, the complex is composed of two ATP-binding proteins (ZnuC), two transmembrane proteins (ZnuB) and a solute-binding protein (ZnuA).

It localises to the cell inner membrane. The enzyme catalyses Zn(2+)(out) + ATP(in) + H2O(in) = Zn(2+)(in) + ADP(in) + phosphate(in) + H(+)(in). Part of the ABC transporter complex ZnuABC involved in zinc import. Responsible for energy coupling to the transport system. The protein is Zinc import ATP-binding protein ZnuC of Mannheimia succiniciproducens (strain KCTC 0769BP / MBEL55E).